Reading from the N-terminus, the 261-residue chain is Probable RNA-binding protein ARP1 (261 aa).

The region spanning 17-94 (TKVFVGGLAW…RRANCNLASL (78 aa)) is the RRM domain. The tract at residues 96–122 (GRLRKSPTMTSPQQGPKNGNRATPPHV) is disordered. Polar residues predominate over residues 102–116 (PTMTSPQQGPKNGNR).

In terms of tissue distribution, expressed in vasculature of leaves, roots and siliques.

Its subcellular location is the nucleus. Functionally, probable RNA-binding protein involved in the regulation of abscisic acid (ABA) response during seed germination. May regulate transcript levels of several germination-responsive genes under ABA. This chain is Probable RNA-binding protein ARP1, found in Arabidopsis thaliana (Mouse-ear cress).